Reading from the N-terminus, the 314-residue chain is Olfactory receptor 5D14 (314 aa).

At 1-27 the chain is on the extracellular side; the sequence is MMMVLRNLSMEPTFALLGFTDYPKLQI. Asparagine 7 carries an N-linked (GlcNAc...) asparagine glycan. Residues 28-48 form a helical membrane-spanning segment; that stretch reads PLFLVFLLMYVITVVGNLGMI. Over 49–56 the chain is Cytoplasmic; sequence IIIKINPK. A helical transmembrane segment spans residues 57 to 77; it reads FHTPMYFFLSHLSFVDFCYSS. At 78–101 the chain is on the extracellular side; sequence IVTPKLLENLVMADKSIFYFSCMM. Residues 102–122 form a helical membrane-spanning segment; sequence QYFLSCTAVVTESFLLAVMAY. The Cytoplasmic segment spans residues 123–141; the sequence is DRFVAICNPLLYTVAMSQR. The chain crosses the membrane as a helical span at residues 142 to 162; sequence LCALLVAGSYLWGMFGPLVLL. Residues 163–198 lie on the Extracellular side of the membrane; it reads CYALRLNFSGPNVINHFFCEYTALISVSGSDILIPH. Asparagine 169 is a glycosylation site (N-linked (GlcNAc...) asparagine). Residues 199–219 form a helical membrane-spanning segment; it reads LLLFSFATFNEMCTLLIILTS. Residues 220-239 are Cytoplasmic-facing; the sequence is YVFIFVTVLKIRSVSGRHKA. A helical transmembrane segment spans residues 240-260; that stretch reads FSTWASHLTSITIFHGTILFL. Residues 261 to 273 are Extracellular-facing; it reads YCVPNSKNSRQTV. Residues 274 to 294 form a helical membrane-spanning segment; it reads KVASVFYTVVNPMLNPLIYSL. Over 295 to 314 the chain is Cytoplasmic; that stretch reads RNKDVKDAFWKLIHTQVPFH.

Belongs to the G-protein coupled receptor 1 family.

Its subcellular location is the cell membrane. Its function is as follows. Odorant receptor. This is Olfactory receptor 5D14 (OR5D14) from Homo sapiens (Human).